Consider the following 236-residue polypeptide: Ribose-5-phosphate isomerase A (236 aa).

Substrate contacts are provided by residues T33 to T36, D90 to D93, and K103 to G106. E112 functions as the Proton acceptor in the catalytic mechanism. K130 serves as a coordination point for substrate.

The protein belongs to the ribose 5-phosphate isomerase family. As to quaternary structure, homodimer.

It catalyses the reaction aldehydo-D-ribose 5-phosphate = D-ribulose 5-phosphate. It functions in the pathway carbohydrate degradation; pentose phosphate pathway; D-ribose 5-phosphate from D-ribulose 5-phosphate (non-oxidative stage): step 1/1. Functionally, catalyzes the reversible conversion of ribose-5-phosphate to ribulose 5-phosphate. In Nostoc sp. (strain PCC 7120 / SAG 25.82 / UTEX 2576), this protein is Ribose-5-phosphate isomerase A.